The following is a 94-amino-acid chain: uncharacterized protein (94 aa).

Over residues 33–42 (INSLPTFTKP) the composition is skewed to polar residues. Residues 33–57 (INSLPTFTKPNDSNNNVNKSSNDGV) are disordered. Residues 43–57 (NDSNNNVNKSSNDGV) are compositionally biased toward low complexity.

This is an uncharacterized protein from Dictyostelium discoideum (Social amoeba).